The primary structure comprises 487 residues: Protein nucleotidyltransferase YdiU (487 aa).

The ATP site is built by glycine 90, glycine 92, arginine 93, lysine 113, aspartate 125, glycine 126, arginine 176, and arginine 183. Aspartate 252 (proton acceptor) is an active-site residue. Residues asparagine 253 and aspartate 262 each coordinate Mg(2+). Aspartate 262 provides a ligand contact to ATP.

It belongs to the SELO family. The cofactor is Mg(2+). Mn(2+) is required as a cofactor.

The catalysed reaction is L-seryl-[protein] + ATP = 3-O-(5'-adenylyl)-L-seryl-[protein] + diphosphate. It catalyses the reaction L-threonyl-[protein] + ATP = 3-O-(5'-adenylyl)-L-threonyl-[protein] + diphosphate. The enzyme catalyses L-tyrosyl-[protein] + ATP = O-(5'-adenylyl)-L-tyrosyl-[protein] + diphosphate. It carries out the reaction L-histidyl-[protein] + UTP = N(tele)-(5'-uridylyl)-L-histidyl-[protein] + diphosphate. The catalysed reaction is L-seryl-[protein] + UTP = O-(5'-uridylyl)-L-seryl-[protein] + diphosphate. It catalyses the reaction L-tyrosyl-[protein] + UTP = O-(5'-uridylyl)-L-tyrosyl-[protein] + diphosphate. Functionally, nucleotidyltransferase involved in the post-translational modification of proteins. It can catalyze the addition of adenosine monophosphate (AMP) or uridine monophosphate (UMP) to a protein, resulting in modifications known as AMPylation and UMPylation. This chain is Protein nucleotidyltransferase YdiU, found in Pseudomonas fluorescens (strain SBW25).